A 534-amino-acid chain; its full sequence is GMP synthase [glutamine-hydrolyzing] (534 aa).

The 191-residue stretch at 20-210 folds into the Glutamine amidotransferase type-1 domain; that stretch reads MLIILDFGSQ…VYHICDCEPT (191 aa). Cysteine 97 (nucleophile) is an active-site residue. Residues histidine 184 and glutamate 186 contribute to the active site. In terms of domain architecture, GMPS ATP-PPase spans 211 to 409; the sequence is WTTETFVEEA…LGLPEEIVKR (199 aa). 238 to 244 is a binding site for ATP; it reads SGGVDSS.

Homodimer.

The catalysed reaction is XMP + L-glutamine + ATP + H2O = GMP + L-glutamate + AMP + diphosphate + 2 H(+). It functions in the pathway purine metabolism; GMP biosynthesis; GMP from XMP (L-Gln route): step 1/1. Its function is as follows. Catalyzes the synthesis of GMP from XMP. The polypeptide is GMP synthase [glutamine-hydrolyzing] (Synechococcus sp. (strain ATCC 27144 / PCC 6301 / SAUG 1402/1) (Anacystis nidulans)).